Consider the following 216-residue polypeptide: Probable GTP-binding protein EngB (216 aa).

The EngB-type G domain maps to 23 to 197 (EGAEIAFAGR…EHKVAGWLGL (175 aa)). Residues 31-38 (GRSNAGKS), 58-62 (GRTQL), 76-79 (DLPG), 143-146 (TKCD), and 176-178 (FSS) contribute to the GTP site. Mg(2+) contacts are provided by Ser-38 and Thr-60.

The protein belongs to the TRAFAC class TrmE-Era-EngA-EngB-Septin-like GTPase superfamily. EngB GTPase family. Requires Mg(2+) as cofactor.

Functionally, necessary for normal cell division and for the maintenance of normal septation. This is Probable GTP-binding protein EngB from Aromatoleum aromaticum (strain DSM 19018 / LMG 30748 / EbN1) (Azoarcus sp. (strain EbN1)).